Here is a 196-residue protein sequence, read N- to C-terminus: MKVGVIGLQGDVSEHIDATNLALKKLGVSGEAIWLKKPEQLKEVSAIIIPGGESTTISRLMQKTGLFEPVKKLIEDGLPVMGTCAGLIMLSREVLGATPEQRFLEVLDVRVNRNAYGRQVDSFEAPVRLSFDDEPFIGVFIRAPRIVELLSDRVKPLAWLEDRVVGVEQDNIIGLEFHPELTDDTRVHEYFLKKAL.

52–54 is an L-glutamine binding site; sequence GES. Cys-84 serves as the catalytic Nucleophile. Residues Arg-113 and 141 to 142 contribute to the L-glutamine site; that span reads IR. Active-site charge relay system residues include His-178 and Glu-180.

Belongs to the glutaminase PdxT/SNO family. In the presence of PdxS, forms a dodecamer of heterodimers. Only shows activity in the heterodimer.

The catalysed reaction is aldehydo-D-ribose 5-phosphate + D-glyceraldehyde 3-phosphate + L-glutamine = pyridoxal 5'-phosphate + L-glutamate + phosphate + 3 H2O + H(+). It carries out the reaction L-glutamine + H2O = L-glutamate + NH4(+). Its pathway is cofactor biosynthesis; pyridoxal 5'-phosphate biosynthesis. Functionally, catalyzes the hydrolysis of glutamine to glutamate and ammonia as part of the biosynthesis of pyridoxal 5'-phosphate. The resulting ammonia molecule is channeled to the active site of PdxS. In Pyrococcus abyssi (strain GE5 / Orsay), this protein is Pyridoxal 5'-phosphate synthase subunit PdxT.